A 166-amino-acid polypeptide reads, in one-letter code: MFPMVTKFMNYGQQTVRAARYIGQGFIITLSHANRLPVTIQYPYEKLITSERFRGRIHFEFDKCIACEVCVRVCPIDLPVVDWKLETDIRKKRLLNYSIDFGICIFCGNCVEYCPTNCLSMTEEYELSTYDRHELNYNQIALGRLPMSIIDDYTIRTILNLPEIKT.

2 4Fe-4S ferredoxin-type domains span residues 55–84 and 95–124; these read GRIH…VDWK and LNYS…MTEE. The [4Fe-4S] cluster site is built by C64, C67, C70, C74, C104, C107, C110, and C114.

Belongs to the complex I 23 kDa subunit family. NDH is composed of at least 16 different subunits, 5 of which are encoded in the nucleus. Requires [4Fe-4S] cluster as cofactor.

It is found in the plastid. The protein resides in the chloroplast thylakoid membrane. It catalyses the reaction a plastoquinone + NADH + (n+1) H(+)(in) = a plastoquinol + NAD(+) + n H(+)(out). It carries out the reaction a plastoquinone + NADPH + (n+1) H(+)(in) = a plastoquinol + NADP(+) + n H(+)(out). NDH shuttles electrons from NAD(P)H:plastoquinone, via FMN and iron-sulfur (Fe-S) centers, to quinones in the photosynthetic chain and possibly in a chloroplast respiratory chain. The immediate electron acceptor for the enzyme in this species is believed to be plastoquinone. Couples the redox reaction to proton translocation, and thus conserves the redox energy in a proton gradient. The sequence is that of NAD(P)H-quinone oxidoreductase subunit I, chloroplastic from Palafoxia arida (Spanish needles).